A 396-amino-acid polypeptide reads, in one-letter code: Tryptophan synthase beta chain (396 aa).

Lys-88 is modified (N6-(pyridoxal phosphate)lysine).

Belongs to the TrpB family. In terms of assembly, tetramer of two alpha and two beta chains. The cofactor is pyridoxal 5'-phosphate.

It carries out the reaction (1S,2R)-1-C-(indol-3-yl)glycerol 3-phosphate + L-serine = D-glyceraldehyde 3-phosphate + L-tryptophan + H2O. It functions in the pathway amino-acid biosynthesis; L-tryptophan biosynthesis; L-tryptophan from chorismate: step 5/5. Its function is as follows. The beta subunit is responsible for the synthesis of L-tryptophan from indole and L-serine. This is Tryptophan synthase beta chain from Actinobacillus pleuropneumoniae serotype 3 (strain JL03).